A 637-amino-acid polypeptide reads, in one-letter code: Glutamate--cysteine ligase catalytic subunit (637 aa).

Position 1 is an N-acetylmethionine (M1). 2 positions are modified to phosphoserine: S5 and S8.

Belongs to the glutamate--cysteine ligase type 3 family. As to quaternary structure, heterodimer of a catalytic heavy chain and a regulatory light chain. In terms of tissue distribution, most abundant in kidney. Also found in liver and testis.

It carries out the reaction L-cysteine + L-glutamate + ATP = gamma-L-glutamyl-L-cysteine + ADP + phosphate + H(+). It catalyses the reaction (2S)-2-aminobutanoate + L-glutamate + ATP = gamma-L-glutamyl-(2S)-2-aminobutanoate + ADP + phosphate + H(+). The protein operates within sulfur metabolism; glutathione biosynthesis; glutathione from L-cysteine and L-glutamate: step 1/2. With respect to regulation, feedback inhibition by glutathione. In terms of biological role, catalyzes the ATP-dependent ligation of L-glutamate and L-cysteine and participates in the first and rate-limiting step in glutathione biosynthesis. The chain is Glutamate--cysteine ligase catalytic subunit from Rattus norvegicus (Rat).